Reading from the N-terminus, the 425-residue chain is Serine hydroxymethyltransferase (425 aa).

(6S)-5,6,7,8-tetrahydrofolate-binding positions include L125 and 129 to 131 (GHL). K234 is subject to N6-(pyridoxal phosphate)lysine.

Belongs to the SHMT family. As to quaternary structure, homodimer. Pyridoxal 5'-phosphate serves as cofactor.

Its subcellular location is the cytoplasm. It carries out the reaction (6R)-5,10-methylene-5,6,7,8-tetrahydrofolate + glycine + H2O = (6S)-5,6,7,8-tetrahydrofolate + L-serine. It participates in one-carbon metabolism; tetrahydrofolate interconversion. The protein operates within amino-acid biosynthesis; glycine biosynthesis; glycine from L-serine: step 1/1. Catalyzes the reversible interconversion of serine and glycine with tetrahydrofolate (THF) serving as the one-carbon carrier. This reaction serves as the major source of one-carbon groups required for the biosynthesis of purines, thymidylate, methionine, and other important biomolecules. Also exhibits THF-independent aldolase activity toward beta-hydroxyamino acids, producing glycine and aldehydes, via a retro-aldol mechanism. The protein is Serine hydroxymethyltransferase of Marinomonas sp. (strain MWYL1).